A 159-amino-acid polypeptide reads, in one-letter code: MIVFTRRITEADTVTGTLTLAVDSRIKSRLRVTLDDGREAGLMLERGHLLRGGELLADADGRQVVRVLAAPEAVSTVRCADPHLLARAAYHLGNRHVPLQIEPGLLRYQHDHVLDDMVRGLGLNVDAERAPFEPESGAYQSAPHGHGHDHPFVRLPAHS.

The protein belongs to the UreE family.

The protein resides in the cytoplasm. Functionally, involved in urease metallocenter assembly. Binds nickel. Probably functions as a nickel donor during metallocenter assembly. The protein is Urease accessory protein UreE of Pseudomonas entomophila (strain L48).